The following is a 530-amino-acid chain: Ubiquitin carboxyl-terminal hydrolase 17-like protein 1 (530 aa).

The USP domain maps to 80–375; sequence AGLQNMGNTC…QAYVLFYIQK (296 aa). The Nucleophile role is filled by cysteine 89. Histidine 334 functions as the Proton acceptor in the catalytic mechanism. 2 stretches are compositionally biased toward basic and acidic residues: residues 382–392 and 398–411; these read SESVSRGREPR and DTDR…LKRD. The tract at residues 382–411 is disordered; that stretch reads SESVSRGREPRALGAEDTDRRAKQGELKRD.

This sequence belongs to the peptidase C19 family. USP17 subfamily.

It is found in the nucleus. It localises to the endoplasmic reticulum. It carries out the reaction Thiol-dependent hydrolysis of ester, thioester, amide, peptide and isopeptide bonds formed by the C-terminal Gly of ubiquitin (a 76-residue protein attached to proteins as an intracellular targeting signal).. In terms of biological role, deubiquitinating enzyme that removes conjugated ubiquitin from specific proteins to regulate different cellular processes that may include cell proliferation, progression through the cell cycle, apoptosis, cell migration, and the cellular response to viral infection. The protein is Ubiquitin carboxyl-terminal hydrolase 17-like protein 1 (USP17L1) of Homo sapiens (Human).